A 105-amino-acid polypeptide reads, in one-letter code: Large ribosomal subunit protein bL21 (105 aa).

This sequence belongs to the bacterial ribosomal protein bL21 family. In terms of assembly, part of the 50S ribosomal subunit. Contacts protein L20.

Its function is as follows. This protein binds to 23S rRNA in the presence of protein L20. The protein is Large ribosomal subunit protein bL21 of Parabacteroides distasonis (strain ATCC 8503 / DSM 20701 / CIP 104284 / JCM 5825 / NCTC 11152).